The chain runs to 387 residues: Probable G-protein coupled receptor 173 (387 aa).

Over 1–40 the chain is Extracellular; it reads MANGNASSDGPGNPLAAVVSTTGGVMGGAPSSAVSTYVKL. N-linked (GlcNAc...) asparagine glycosylation occurs at Asn5. Residues 41–61 form a helical membrane-spanning segment; sequence VLLGLIICISLVGNLVVSLLV. At 62–87 the chain is on the cytoplasmic side; sequence LRDRALHKAPYYFLLDLCLADTIRSA. The helical transmembrane segment at 88–108 threads the bilayer; sequence VCFPFVLVSIKNGSAWTYSVL. Topologically, residues 109–111 are extracellular; that stretch reads SCK. Cysteines 110 and 188 form a disulfide. Residues 112–132 form a helical membrane-spanning segment; the sequence is VVAFMAVLFCFHAAFMLFCIS. Over 133–153 the chain is Cytoplasmic; that stretch reads VTRYMAIAHHRFYSKRMTFWT. A helical membrane pass occupies residues 154–174; it reads CVAVVCMVWTLSVAMAFPPVF. The Extracellular portion of the chain corresponds to 175 to 202; sequence DVGTYKFIREEDQCIFEHRYFKANDTLG. A glycan (N-linked (GlcNAc...) asparagine) is linked at Asn198. A helical membrane pass occupies residues 203–223; that stretch reads FMLMLAVLILATHVVYMKLLL. The Cytoplasmic segment spans residues 224–301; the sequence is FEYKHRKMKP…FKAEKQLGRM (78 aa). Residues 302 to 322 form a helical membrane-spanning segment; that stretch reads FYVITLFFLVLWSPYIVACYW. Residues 323–335 are Extracellular-facing; it reads RVFVKACTIPHRY. The helical transmembrane segment at 336-356 threads the bilayer; that stretch reads LSTTVWMSFAQAGVNPIICFF. At 357 to 387 the chain is on the cytoplasmic side; it reads LNKDLKKGLLAHLPPCCRTPPQLPREPYCVM.

It belongs to the G-protein coupled receptor 1 family.

It is found in the cell membrane. Functionally, is a receptor for the SMIM20 derived peptides Phoenixin-14 and Phoenixin-20. It mediates the Phoenixin-14 and Phoenixin-20 augmentation of gonadotropin-releasing hormone (GNRH) signaling in the hypothalamus and pituitary gland. In the ovary, it mediates the effects of Phoenixin-14 and Phoenixin-20 induced granulosa cell proliferation during follicular growth. The chain is Probable G-protein coupled receptor 173 (gpr173) from Danio rerio (Zebrafish).